The primary structure comprises 537 residues: Tyrosine-protein kinase Fyn (537 aa).

Gly-2 is lipidated: N-myristoyl glycine. S-palmitoyl cysteine attachment occurs at residues Cys-3 and Cys-6. The segment at 14–35 is disordered; it reads LTEERDGSLNQSSGYRYGTDPT. 2 positions are modified to phosphoserine: Ser-21 and Ser-26. The SH3 domain occupies 82 to 143; sequence TGVTLFVALY…PSNYVAPVDS (62 aa). Residues 149–246 form the SH2 domain; sequence WYFGKLGRKD…GLCCRLVVPC (98 aa). Tyr-185 carries the phosphotyrosine modification. The Protein kinase domain occupies 271–524; sequence LQLIKRLGNG…YLQGFLEDYF (254 aa). ATP is bound by residues 277–285 and Lys-299; that span reads LGNGQFGEV. Residue Asp-390 is the Proton acceptor of the active site. Tyr-420 carries the phosphotyrosine; by autocatalysis modification. Tyr-531 is subject to Phosphotyrosine.

This sequence belongs to the protein kinase superfamily. Tyr protein kinase family. SRC subfamily. In terms of assembly, interacts (via its SH3 domain) with PIK3R1 and PRMT8. Interacts with FYB1, PAG1, and SH2D1A. Interacts with CD79A (tyrosine-phosphorylated form); the interaction increases FYN activity. Interacts (via SH2 domain) with CSF1R (tyrosine phosphorylated). Interacts with TOM1L1 (phosphorylated form). Interacts with KDR (tyrosine phosphorylated). Interacts (via SH3 domain) with KLHL2 (via N-terminus). Interacts with SH2D1A and SLAMF1. Interacts with ITCH; the interaction phosphorylates ITCH and negatively regulates its activity. Interacts with FASLG. Interacts with RUNX3. Interacts with KIT. Interacts with EPHA8; possible downstream effector of EPHA8 in regulation of cell adhesion. Interacts with PTK2/FAK1; this interaction leads to PTK2/FAK1 phosphorylation and activation. Interacts with CAV1; this interaction couples integrins to the Ras-ERK pathway. Interacts with UNC119. Interacts (via SH2 domain) with PTPRH (phosphorylated form). Interacts with PTPRO (phosphorylated form). Interacts with PTPRB (phosphorylated form). Interacts with FYB2. Interacts with DSCAM. Interacts with SKAP1 and FYB1; this interaction promotes the phosphorylation of CLNK. Interacts with NEDD9; in the presence of PTK2. It depends on Mn(2+) as a cofactor. Post-translationally, autophosphorylated at Tyr-420. Phosphorylation on the C-terminal tail at Tyr-531 by CSK maintains the enzyme in an inactive state. PTPRC/CD45 dephosphorylates Tyr-531 leading to activation. Dephosphorylation at Tyr-420 by PTPN2 negatively regulates T-cell receptor signaling. Phosphorylated at tyrosine residues, which can be enhanced by NTN1. In terms of processing, palmitoylated. Palmitoylation at Cys-3 and Cys-6, probably by ZDHHC21, regulates subcellular location. As to expression, detected in spinal cord oligodendrocytes (at protein level).

It localises to the cytoplasm. The protein localises to the nucleus. It is found in the cell membrane. Its subcellular location is the perikaryon. The enzyme catalyses L-tyrosyl-[protein] + ATP = O-phospho-L-tyrosyl-[protein] + ADP + H(+). Its activity is regulated as follows. Inhibited by phosphorylation of Tyr-531 by leukocyte common antigen and activated by dephosphorylation of this site. Non-receptor tyrosine-protein kinase that plays a role in many biological processes including regulation of cell growth and survival, cell adhesion, integrin-mediated signaling, cytoskeletal remodeling, cell motility, immune response and axon guidance. Inactive FYN is phosphorylated on its C-terminal tail within the catalytic domain. Following activation by PKA, the protein subsequently associates with PTK2/FAK1, allowing PTK2/FAK1 phosphorylation, activation and targeting to focal adhesions. Involved in the regulation of cell adhesion and motility through phosphorylation of CTNNB1 (beta-catenin) and CTNND1 (delta-catenin). Regulates cytoskeletal remodeling by phosphorylating several proteins including the actin regulator WAS and the microtubule-associated proteins MAP2 and MAPT. Promotes cell survival by phosphorylating AGAP2/PIKE-A and preventing its apoptotic cleavage. Participates in signal transduction pathways that regulate the integrity of the glomerular slit diaphragm (an essential part of the glomerular filter of the kidney) by phosphorylating several slit diaphragm components including NPHS1, KIRREL1 and TRPC6. Plays a role in neural processes by phosphorylating DPYSL2, a multifunctional adapter protein within the central nervous system, ARHGAP32, a regulator for Rho family GTPases implicated in various neural functions, and SNCA, a small pre-synaptic protein. Involved in reelin signaling by mediating phosphorylation of DAB1 following reelin (RELN)-binding to its receptor. Participates in the downstream signaling pathways that lead to T-cell differentiation and proliferation following T-cell receptor (TCR) stimulation. Phosphorylates PTK2B/PYK2 in response to T-cell receptor activation. Also participates in negative feedback regulation of TCR signaling through phosphorylation of PAG1, thereby promoting interaction between PAG1 and CSK and recruitment of CSK to lipid rafts. CSK maintains LCK and FYN in an inactive form. Promotes CD28-induced phosphorylation of VAV1. In mast cells, phosphorylates CLNK after activation of immunoglobulin epsilon receptor signaling. Can also promote CD244-mediated NK cell activation. This is Tyrosine-protein kinase Fyn from Rattus norvegicus (Rat).